We begin with the raw amino-acid sequence, 843 residues long: Protein PLASTID MOVEMENT IMPAIRED 1 (843 aa).

A compositionally biased stretch (polar residues) spans 30-58 (PQVSVGNRRTNSLALPRSSVPSLVTSADE). Disordered regions lie at residues 30-65 (PQVS…ARAE) and 88-116 (LEVE…SGVK). Positions 131–284 (LVRIGMQKLS…ELALKLGFQI (154 aa)) constitute a C2 NT-type domain. Disordered regions lie at residues 300–412 (FGMK…GTIG) and 450–472 (MMKD…EEEQ). A compositionally biased stretch (polar residues) spans 307–336 (KPKNFANSFGRKQSKTSFSVPSPKMTSRSE). Phosphoserine is present on residues serine 314 and serine 328. Residues 365 to 381 (PEEKPVQKNDKPEQRAE) show a composition bias toward basic and acidic residues. Threonine 404 bears the Phosphothreonine mark. Residue serine 407 is modified to Phosphoserine. Phosphothreonine is present on threonine 410. The span at 456–472 (DGGDGETESQRLDEEEQ) shows a compositional bias: acidic residues. Position 507 is a phosphoserine (serine 507).

In terms of tissue distribution, expressed in leaves, stems, cauline leaves, and flowers but not in roots. Present in leaves in both mesophyll and pavement cells.

The protein resides in the cytoplasm. In terms of biological role, necessary for chloroplast and nuclear photorelocation movements via the regulation of chloroplast-actin (cp-actin) filaments in mesophyll cells, and together with PMIR1, in pavement cells. Required component for both the low- and high-light-dependent chloroplast movement responses via an abscisic acid (ABA) pathway. Involved in the ABA response pathway during seed germination. Modulates ABA accumulation during periods of water deficit at the seedling stage. This Arabidopsis thaliana (Mouse-ear cress) protein is Protein PLASTID MOVEMENT IMPAIRED 1.